The sequence spans 413 residues: Protein arginine N-methyltransferase 2 (413 aa).

Disordered regions lie at residues 65–85 (DDEE…QKSV) and 148–178 (ELED…SAPQ). Residues 148-173 (ELEDDDEEEEEGQEEQTGTEEVEVEG) show a composition bias toward acidic residues. The region spanning 192 to 413 (TGPDVTNSRY…YRLPLCKYMD (222 aa)) is the RMT2 domain. S-adenosyl-L-methionine contacts are provided by residues Tyr201, Met230, 250 to 255 (HGMGIV), 271 to 273 (EAH), 298 to 299 (WQ), and Asp318.

It belongs to the class I-like SAM-binding methyltransferase superfamily. RMT2 methyltransferase family. Monomer.

Its subcellular location is the cytoplasm. It localises to the nucleus. In terms of biological role, S-adenosyl-L-methionine-dependent protein-arginine N-methyltransferase that methylates the delta-nitrogen atom of arginine residues to form N5-methylarginine (type IV) in target proteins. Monomethylates ribosomal protein L12. The polypeptide is Protein arginine N-methyltransferase 2 (Aspergillus oryzae (strain ATCC 42149 / RIB 40) (Yellow koji mold)).